We begin with the raw amino-acid sequence, 768 residues long: Multidomain esterase (768 aa).

An N-terminal signal peptide occupies residues 1–40; it reads MKKHFVVGETIKRFLRIGTSLALSISTLSLLPSAPRLSSA. An acetylxylan esterase region spans residues 41 to 264; that stretch reads AGTIKIMPLG…YWLEQIEGYL (224 aa). The Nucleophile; for acetylxylan esterase activity role is filled by Ser68. Active-site for acetylxylan esterase activity residues include Asp240 and His243. Over residues 267–283 the composition is skewed to low complexity; it reads SDGPQQTQPTQPSQGDS. Residues 267–289 are disordered; it reads SDGPQQTQPTQPSQGDSGPELIY. The Dockerin domain maps to 285-352; the sequence is PELIYGDLDG…IIGKIKEFTV (68 aa). Residues 353 to 768 form a glucuronoyl esterase region; sequence AEKTVTEKPV…ADTFASKWLY (416 aa). The GXSYXG catalytic site motif signature appears at 563–568; sequence GVSRYG. Ser565 acts as the Nucleophile; for glucuronoyl esterase activity in catalysis. Substrate contacts are provided by Lys569, Glu633, and Trp679.

The protein in the N-terminal section; belongs to the carbohydrate esterase 3 (CE3) family. This sequence in the C-terminal section; belongs to the carbohydrate esterase 15 (CE15) family.

It is found in the secreted. It carries out the reaction Deacetylation of xylans and xylo-oligosaccharides.. It catalyses the reaction a 4-O-methyl-alpha-D-glucuronosyl ester derivative + H2O = 4-O-methyl-alpha-D-glucuronate derivative + an alcohol + H(+). It participates in glycan degradation; xylan degradation. Esterase involved in the degradation of plant cell wall polysaccharides. Catalyzes the deacetylation of chemically acetylated xylan and native, steam-extracted xylan. Seems to act in synergy with the xylanase XynD which produces xylo-oligosaccharides. Also catalyzes the deesterification of methyl esters of 4-O-methyl-D-glucuronic acid (MeGlcA) side residues in synthetic glucuronoxylan methyl ester, suggesting that it may be able to cleave ester linkages between MeGlcA carboxyl and more complex alcohols, including linkages between hemicellulose and lignin alcohols in plant cell walls. This chain is Multidomain esterase, found in Ruminococcus flavefaciens.